The sequence spans 389 residues: Sedoheptulose-1,7-bisphosphatase, chloroplastic (389 aa).

A disulfide bond links Cys-115 and Cys-120. Residues Asp-126, Glu-155, Asp-173, Leu-175, and Asp-176 each coordinate Mg(2+). Residues 176-179 (DGSS), Tyr-287, and Lys-317 contribute to the substrate site. Glu-323 contributes to the Mg(2+) binding site.

It belongs to the FBPase class 1 family. As to quaternary structure, homodimer. It depends on Mg(2+) as a cofactor.

Its subcellular location is the plastid. The protein resides in the chloroplast. The catalysed reaction is D-sedoheptulose 1,7-bisphosphate + H2O = D-sedoheptulose 7-phosphate + phosphate. The protein operates within carbohydrate biosynthesis; Calvin cycle. The sequence is that of Sedoheptulose-1,7-bisphosphatase, chloroplastic (CSBP) from Chlamydomonas reinhardtii (Chlamydomonas smithii).